A 419-amino-acid chain; its full sequence is MSAFVDAVTVEVKAGRGGNGKVAFRREAHVEFGGPAGGNGGRGGHIYFIGDEGKNTLIDLKYNRHIKAANGVHGGPKGMHGAHAEDTYVRVPLGTIVYDDKENLIGEVLEHGQTLLIAQGGKGGRGNMAFASNNNKAPDFAEQGDLGQIFLAKVELQVLADVGLLGYPNVGKSTLITRISNAKAKIADYQFTTLSPQLGMVNVEDDAFVVADLPGLIEFAHLGVGLGLQFLKHVERCRVLLHIVSMDSLDPLDDYNKINNELVLYDEKLKDRTQIVVANKMDVEGAQEKFEAFKKALKDVKVIPISALMNDGIQTLKYEIATTLKTIPKFAPKDTTKHYTLNAEDAVDFIINKGDDGVFELTGDKLFVLFNRTDFNNESAVKRFARQLRGLGIEDALREHGVVHGDIVRIFSYEFEYLE.

The Obg domain maps to 2 to 159 (SAFVDAVTVE…FLAKVELQVL (158 aa)). In terms of domain architecture, OBG-type G spans 160–325 (ADVGLLGYPN…LKYEIATTLK (166 aa)). GTP contacts are provided by residues 166-173 (GYPNVGKS), 191-195 (FTTLS), 212-215 (DLPG), 279-282 (NKMD), and 306-308 (SAL). Positions 173 and 193 each coordinate Mg(2+). Residues 341–419 (LNAEDAVDFI…IFSYEFEYLE (79 aa)) enclose the OCT domain.

Belongs to the TRAFAC class OBG-HflX-like GTPase superfamily. OBG GTPase family. As to quaternary structure, monomer. Requires Mg(2+) as cofactor.

It is found in the cytoplasm. In terms of biological role, an essential GTPase which binds GTP, GDP and possibly (p)ppGpp with moderate affinity, with high nucleotide exchange rates and a fairly low GTP hydrolysis rate. Plays a role in control of the cell cycle, stress response, ribosome biogenesis and in those bacteria that undergo differentiation, in morphogenesis control. This chain is GTPase Obg, found in Acholeplasma laidlawii (strain PG-8A).